A 179-amino-acid chain; its full sequence is Replication restart protein DnaT (179 aa).

Residues 156–179 form a disordered region; the sequence is GGLPKRDVNTVSEPDSQIPPGFRG.

Belongs to the DnaT family. Homooligomerizes. Interacts with PriB. Component of the replication restart primosome. Primosome assembly occurs via a 'hand-off' mechanism. PriA binds to replication forks, subsequently PriB then DnaT bind; DnaT then displaces ssDNA to generate the helicase loading substrate.

Functionally, involved in the restart of stalled replication forks, which reloads the replicative helicase on sites other than the origin of replication. Can function in multiple replication restart pathways. Displaces ssDNA from a PriB-ssDNA complex. Probably forms a spiral filament on ssDNA. The sequence is that of Replication restart protein DnaT from Escherichia coli O81 (strain ED1a).